We begin with the raw amino-acid sequence, 2150 residues long: A disintegrin and metalloproteinase with thrombospondin motifs gon-1 (2150 aa).

Positions 1–28 (MRSIGGSFHLLQPVVAALILLVVCLVYA) are cleaved as a signal peptide. The propeptide occupies 29–273 (LQSGSGTISE…VIERKARSRR (245 aa)). N-linked (GlcNAc...) asparagine glycosylation is found at N134, N213, N243, and N248. One can recognise a Peptidase M12B domain in the interval 280–493 (HYVEVLVVAD…GQTQCLFDQP (214 aa)). 2 disulfides stabilise this stretch: C402–C488 and C440–C470. H424 lines the Zn(2+) pocket. E425 is a catalytic residue. H428 and H434 together coordinate Zn(2+). The region spanning 503–587 (FVRDEPGKKY…RLAPESLTKI (85 aa)) is the Disintegrin domain. The 56-residue stretch at 588–643 (DGQWGDWRSWGECSRTCGGGVQKGLRDCDSPKPRNGGKYCVGQRERYRSCNTQECP) folds into the TSP type-1 1 domain. 3 cysteine pairs are disulfide-bonded: C600–C637, C604–C642, and C615–C627. A glycan (N-linked (GlcNAc...) asparagine) is linked at N842. 11 TSP type-1 domains span residues 943 to 1003 (CSTR…IDCS), 1004 to 1057 (GRKW…RECN), 1060 to 1115 (PCPR…HACT), 1116 to 1165 (WWQF…KPCH), 1168 to 1227 (SCPK…GTCP), 1228 to 1277 (FWRN…QTCH), 1280 to 1339 (PCTS…DTCD), 1352 to 1409 (PPIR…RDCS), 1410 to 1469 (YWKM…EPCP), 1474 to 1524 (HIGS…ELCP), and 1527 to 1585 (TNNS…PPCR). N1139 and N1199 each carry an N-linked (GlcNAc...) asparagine glycan. N-linked (GlcNAc...) asparagine glycosylation is found at N1370 and N1432. N-linked (GlcNAc...) asparagine glycans are attached at residues N1528, N1590, N1606, and N1654. Residues 1590-1614 (NKTSSASMTSLSSSNSNTTSSASAS) are disordered. Residues 1592–1614 (TSSASMTSLSSSNSNTTSSASAS) show a composition bias toward low complexity. 5 TSP type-1 domains span residues 1621–1675 (PVVS…VRCR), 1678–1736 (HCPR…VACP), 1737–1793 (AYRW…DTSN), 1794–1866 (CPYE…NPCD), and 1867–1924 (SEFK…RNCL). 6 disulfides stabilise this stretch: C1679–C1718, C1690–C1694, C1690–C1730, C1694–C1735, C1705–C1718, and C1730–C1735. N1828 and N1855 each carry an N-linked (GlcNAc...) asparagine glycan. The 200-residue stretch at 1924–2123 (LPSTCQELKS…RYKGLIFEVN (200 aa)) folds into the GON domain. Residues N1942, N1960, and N1997 are each glycosylated (N-linked (GlcNAc...) asparagine).

It depends on Zn(2+) as a cofactor. As to expression, expressed by the gonadal distal tip cells (DTCs). Expressed in muscles, including body wall, vulval and anal depressor muscles. Expressed in motor neurons and in ASI and ASJ neurons.

The protein localises to the secreted. The protein resides in the extracellular space. It is found in the extracellular matrix. Its subcellular location is the basement membrane. It localises to the endoplasmic reticulum. The protein localises to the golgi apparatus. In terms of biological role, secreted metalloprotease required for distal tip cell (DTC) migration along the body wall basement membranes, a key step that promotes gonad morphogenesis. Probably acts by remodeling the basement membrane during cell migration. Required to restrict presynaptic growth at the neuromuscular junctions (NMJ) in late larval stage and in adult motor neurons, probably by controlling collagen IV emb-9 degradation, a component of the synapse basement membrane. Also involved in the organization of adult muscle morphology. Has a protease-independent function in promoting the transport from the endoplasmic reticulum to the Golgi apparatus of a variety of secretory cargos. Required for the secretion of insulin-like peptide ins-7, daf-28 and ins-18 and TGF beta-like protein daf-7. In peripheral tissues, negatively regulates insulin-mediated daf-16 translocation and thereby negatively regulates lifespan and dauer formation. The polypeptide is A disintegrin and metalloproteinase with thrombospondin motifs gon-1 (Caenorhabditis elegans).